We begin with the raw amino-acid sequence, 172 residues long: Protein-export protein SecB (172 aa).

It belongs to the SecB family. As to quaternary structure, homotetramer, a dimer of dimers. One homotetramer interacts with 1 SecA dimer.

It is found in the cytoplasm. Functionally, one of the proteins required for the normal export of preproteins out of the cell cytoplasm. It is a molecular chaperone that binds to a subset of precursor proteins, maintaining them in a translocation-competent state. It also specifically binds to its receptor SecA. This chain is Protein-export protein SecB, found in Cupriavidus pinatubonensis (strain JMP 134 / LMG 1197) (Cupriavidus necator (strain JMP 134)).